A 220-amino-acid polypeptide reads, in one-letter code: uncharacterized protein (220 aa).

Residues 20 to 42 (FFKKLVPIIIIISIVVITIMVII) form a helical membrane-spanning segment.

The protein localises to the membrane. This is an uncharacterized protein from Rickettsia prowazekii (strain Madrid E).